We begin with the raw amino-acid sequence, 343 residues long: MSSPDTPVCASPQQMEMYNSHFYTCALFFNLLIAFTSMTLIIMAIRKLLTESIINTSTRMFLIVGLLCCSLHQTAYIVLRVQVIFQILFKLDQPCKLYYKAYDCKYVTFSLVAGNTGMIFIQSAMTIDRILTTVFTNLWPKLKYWPGVILSSFMIGCNFTNVQFIFWNDPLTDYVPTCGQFPPKSVGRFQKFLEIALYMSLAHMVINVIILYINVVQDRRQRLVSTHDQSQSFDVNQRFQSRVALKSTQAIFFLSMSQFLSCFLYTIFTKLYLTLQPDMTPLQSGLTLALTYTTPYACIAIPSLIMVTLTFIRNQRHRSINALRSQTETGDQYMQKIKKIWDK.

Residues 1–24 (MSSPDTPVCASPQQMEMYNSHFYT) lie on the Extracellular side of the membrane. A helical transmembrane segment spans residues 25–45 (CALFFNLLIAFTSMTLIIMAI). The Cytoplasmic portion of the chain corresponds to 46–60 (RKLLTESIINTSTRM). The chain crosses the membrane as a helical span at residues 61 to 81 (FLIVGLLCCSLHQTAYIVLRV). The Extracellular portion of the chain corresponds to 82–106 (QVIFQILFKLDQPCKLYYKAYDCKY). The helical transmembrane segment at 107–127 (VTFSLVAGNTGMIFIQSAMTI) threads the bilayer. Over 128-146 (DRILTTVFTNLWPKLKYWP) the chain is Cytoplasmic. Residues 147–167 (GVILSSFMIGCNFTNVQFIFW) traverse the membrane as a helical segment. The Extracellular segment spans residues 168 to 192 (NDPLTDYVPTCGQFPPKSVGRFQKF). The chain crosses the membrane as a helical span at residues 193 to 213 (LEIALYMSLAHMVINVIILYI). Residues 214–247 (NVVQDRRQRLVSTHDQSQSFDVNQRFQSRVALKS) are Cytoplasmic-facing. Residues 248–268 (TQAIFFLSMSQFLSCFLYTIF) traverse the membrane as a helical segment. Over 269–291 (TKLYLTLQPDMTPLQSGLTLALT) the chain is Extracellular. A helical transmembrane segment spans residues 292–312 (YTTPYACIAIPSLIMVTLTFI). The Cytoplasmic segment spans residues 313–343 (RNQRHRSINALRSQTETGDQYMQKIKKIWDK).

The protein belongs to the nematode receptor-like protein sra family.

The protein localises to the membrane. Functionally, a G protein-coupled receptor required for olfactory imprinting a requisite in ordorant response such as benzaldehyde and isoamylalcohol. This chain is Serpentine receptor class alpha-11, found in Caenorhabditis briggsae.